A 784-amino-acid polypeptide reads, in one-letter code: LPS-assembly protein LptD (784 aa).

An N-terminal signal peptide occupies residues Met1–Ala24. 2 disulfide bridges follow: Cys31–Cys724 and Cys173–Cys725.

Belongs to the LptD family. Component of the lipopolysaccharide transport and assembly complex. Interacts with LptE and LptA. In terms of processing, contains two intramolecular disulfide bonds.

It is found in the cell outer membrane. Together with LptE, is involved in the assembly of lipopolysaccharide (LPS) at the surface of the outer membrane. This Salmonella paratyphi A (strain ATCC 9150 / SARB42) protein is LPS-assembly protein LptD.